We begin with the raw amino-acid sequence, 103 residues long: UPF0235 protein RL4503 (103 aa).

The protein belongs to the UPF0235 family.

This is UPF0235 protein RL4503 from Rhizobium johnstonii (strain DSM 114642 / LMG 32736 / 3841) (Rhizobium leguminosarum bv. viciae).